A 66-amino-acid chain; its full sequence is Large ribosomal subunit protein uL29 (66 aa).

Belongs to the universal ribosomal protein uL29 family.

The chain is Large ribosomal subunit protein uL29 from Francisella tularensis subsp. tularensis (strain FSC 198).